We begin with the raw amino-acid sequence, 418 residues long: eIF5-mimic protein 2 (418 aa).

Polar residues predominate over residues 1-14; that stretch reads MNQKQQKPTLSGQR. The interval 1 to 25 is disordered; the sequence is MNQKQQKPTLSGQRFKTRKRDEKER. The region spanning 246–413 is the W2 domain; sequence NQQTIGARKE…KNAEEESESE (168 aa).

The protein belongs to the BZW family.

In terms of biological role, translation initiation regulator which may repress repeat-associated non-AUG (RAN) initiated translation probably by acting as a competitive inhibitor of eukaryotic translation initiation factor 5 (EIF5) function. Enhances histone H4 gene transcription but does not seem to bind DNA directly. The sequence is that of eIF5-mimic protein 2 (BZW1) from Gallus gallus (Chicken).